The primary structure comprises 244 residues: Short-chain dehydrogenase/reductase family member NovK (244 aa).

NADP(+)-binding positions include 9–12 (GGGE), 59–60 (EL), and 154–158 (RPVLD).

The protein belongs to the short-chain dehydrogenases/reductases (SDR) family. In terms of assembly, heterotetramer; the NovJ(2)K(2) heterotetramer is composed of subunits of 2 NovJ and 2 subunits of NovK.

The protein operates within antibiotic biosynthesis; novobiocin biosynthesis. Non-catalytic subunit of the NovJ(2)K(2) heterotetramer that catalyzes the NADPH-dependent reduction of the tyrosyl moiety of L-beta-OH-Tyr-S-NovH intermediate to yield the tethered beta-ketotyrosyl-S-NovH in the novobiocin biosynthesis pathway. Novobiocin is an aminocoumarin family antibiotic that targets bacterial DNA gyrases. The protein is Short-chain dehydrogenase/reductase family member NovK (novK) of Streptomyces niveus (Streptomyces spheroides).